The sequence spans 322 residues: Protein SEC13 homolog (322 aa).

Position 2 is an N-acetylvaline (Val-2). 6 WD repeats span residues 11–50, 55–96, 101–144, 148–204, 210–253, and 260–299; these read SHED…QILI, GHEG…WEKS, GHDS…EVKK, AHTI…QWKE, AHSD…SNTW, and KFND…QWVC. Ser-184 is subject to Phosphoserine. Ser-309 is subject to Phosphoserine.

Belongs to the WD repeat SEC13 family. At the nuclear pore: component of the Y-shaped Nup107-160 subcomplex of the nuclear pore complex (NPC). The Nup107-160 subcomplex includes NUP160, NUP133, NUP107, NUP98, NUP85, NUP43, NUP37, SEH1 and SEC13. At the COPII coat complex: interacts with SEC31A and SEC31B. Interacts with SEC16A. Interacts with SEC16B. Component of the GATOR2 subcomplex, composed of MIOS, SEC13, SEH1L, WDR24 and WDR59. The GATOR2 complex interacts with CASTOR1 and CASTOR2; the interaction is negatively regulated by arginine. The GATOR2 complex interacts with SESN1, SESN2 and SESN3; the interaction is negatively regulated by amino acids.

Its subcellular location is the cytoplasmic vesicle. The protein localises to the COPII-coated vesicle membrane. It is found in the endoplasmic reticulum membrane. It localises to the nucleus. The protein resides in the nuclear pore complex. Its subcellular location is the lysosome membrane. Its activity is regulated as follows. The GATOR2 complex is negatively regulated by the upstream amino acid sensors CASTOR1 and SESN2, which sequester the GATOR2 complex in absence of amino acids. In the presence of abundant amino acids, GATOR2 is released from CASTOR1 and SESN2 and activated. Its function is as follows. Functions as a component of the nuclear pore complex (NPC) and the COPII coat. At the endoplasmic reticulum, SEC13 is involved in the biogenesis of COPII-coated vesicles. Required for the exit of adipsin (CFD/ADN), an adipocyte-secreted protein from the endoplasmic reticulum. Functionally, as a component of the GATOR2 complex, functions as an activator of the amino acid-sensing branch of the mTORC1 signaling pathway. The GATOR2 complex indirectly activates mTORC1 through the inhibition of the GATOR1 subcomplex. GATOR2 probably acts as an E3 ubiquitin-protein ligase toward GATOR1. In the presence of abundant amino acids, the GATOR2 complex mediates ubiquitination of the NPRL2 core component of the GATOR1 complex, leading to GATOR1 inactivation. In the absence of amino acids, GATOR2 is inhibited, activating the GATOR1 complex. Within the GATOR2 complex, SEC13 and SEH1L are required to stabilize the complex. This chain is Protein SEC13 homolog, found in Homo sapiens (Human).